Consider the following 469-residue polypeptide: Diacetylchitobiose binding protein NgcE (469 aa).

Residues 1-37 constitute a signal peptide (tat-type signal); sequence MTIRAGSLDRRTLLRGAIATAAMGSFAVACSSPSSED. A disordered region spans residues 30-54; the sequence is CSSPSSEDKESDSGPKGEKSANNPF. A compositionally biased stretch (basic and acidic residues) spans 35 to 48; sequence SEDKESDSGPKGEK.

This sequence belongs to the bacterial solute-binding protein 1 family. In terms of assembly, the complex is composed of two ATP-binding proteins (MsiK), two transmembrane proteins (NgcF and NgcG) and a solute-binding protein (NgcE). Predicted to be exported by the Tat system. The position of the signal peptide cleavage has not been experimentally proven.

It is found in the cell membrane. Its function is as follows. Part of the ABC transporter complex NgcEFG-MsiK involved in N,N'-diacetylchitobiose ((GlcNAc)2) uptake. Binds (GlcNAc)2. Can also bind GlcNAc. The polypeptide is Diacetylchitobiose binding protein NgcE (Streptomyces coelicolor (strain ATCC BAA-471 / A3(2) / M145)).